Here is a 558-residue protein sequence, read N- to C-terminus: Glucose-6-phosphate isomerase (558 aa).

A2 bears the N-acetylalanine mark. N6-acetyllysine is present on K12. K34 carries the N6-(2-hydroxyisobutyryl)lysine modification. S107 carries the phosphoserine modification. Position 109 is a phosphothreonine (T109). K142 is modified (N6-acetyllysine). 159–160 provides a ligand contact to D-glucose 6-phosphate; the sequence is GS. S185 is modified (phosphoserine; by CK2). 210-215 is a binding site for D-glucose 6-phosphate; it reads SKTFTT. Position 250 is a phosphothreonine (T250). Positions 354, 358, and 389 each coordinate D-glucose 6-phosphate. Catalysis depends on E358, which acts as the Proton donor. The active site involves H389. The residue at position 454 (K454) is an N6-acetyllysine; alternate. The residue at position 454 (K454) is an N6-malonyllysine; alternate. An N6-succinyllysine; alternate modification is found at K454. S455 carries the post-translational modification Phosphoserine. D-glucose 6-phosphate is bound at residue K519. The active site involves K519.

This sequence belongs to the GPI family. Homodimer; in the catalytically active form. Monomer in the secreted form. In terms of processing, phosphorylation at Ser-185 by CK2 has been shown to decrease enzymatic activity and may contribute to secretion by a non-classical secretory pathway. Post-translationally, ISGylated.

The protein localises to the cytoplasm. It localises to the secreted. The enzyme catalyses alpha-D-glucose 6-phosphate = beta-D-fructose 6-phosphate. The protein operates within carbohydrate degradation; glycolysis; D-glyceraldehyde 3-phosphate and glycerone phosphate from D-glucose: step 2/4. With respect to regulation, strongly inhibited by erythrose 4-phosphate. Functionally, in the cytoplasm, catalyzes the conversion of glucose-6-phosphate to fructose-6-phosphate, the second step in glycolysis, and the reverse reaction during gluconeogenesis. Besides it's role as a glycolytic enzyme, also acts as a secreted cytokine: acts as an angiogenic factor (AMF) that stimulates endothelial cell motility. Acts as a neurotrophic factor, neuroleukin, for spinal and sensory neurons. It is secreted by lectin-stimulated T-cells and induces immunoglobulin secretion. The protein is Glucose-6-phosphate isomerase of Homo sapiens (Human).